We begin with the raw amino-acid sequence, 204 residues long: Methylthioribulose-1-phosphate dehydratase (204 aa).

2 residues coordinate Zn(2+): His-95 and His-97.

This sequence belongs to the aldolase class II family. MtnB subfamily. Zn(2+) serves as cofactor.

The catalysed reaction is 5-(methylsulfanyl)-D-ribulose 1-phosphate = 5-methylsulfanyl-2,3-dioxopentyl phosphate + H2O. The protein operates within amino-acid biosynthesis; L-methionine biosynthesis via salvage pathway; L-methionine from S-methyl-5-thio-alpha-D-ribose 1-phosphate: step 2/6. Catalyzes the dehydration of methylthioribulose-1-phosphate (MTRu-1-P) into 2,3-diketo-5-methylthiopentyl-1-phosphate (DK-MTP-1-P). This chain is Methylthioribulose-1-phosphate dehydratase, found in Parvibaculum lavamentivorans (strain DS-1 / DSM 13023 / NCIMB 13966).